The sequence spans 236 residues: Phosphoribosylaminoimidazole-succinocarboxamide synthase (236 aa).

The protein belongs to the SAICAR synthetase family.

It carries out the reaction 5-amino-1-(5-phospho-D-ribosyl)imidazole-4-carboxylate + L-aspartate + ATP = (2S)-2-[5-amino-1-(5-phospho-beta-D-ribosyl)imidazole-4-carboxamido]succinate + ADP + phosphate + 2 H(+). It participates in purine metabolism; IMP biosynthesis via de novo pathway; 5-amino-1-(5-phospho-D-ribosyl)imidazole-4-carboxamide from 5-amino-1-(5-phospho-D-ribosyl)imidazole-4-carboxylate: step 1/2. In Campylobacter concisus (strain 13826), this protein is Phosphoribosylaminoimidazole-succinocarboxamide synthase.